The following is a 254-amino-acid chain: 4-hydroxy-tetrahydrodipicolinate reductase (254 aa).

Residues 8–13, aspartate 35, 86–88, and 110–113 contribute to the NAD(+) site; these read GCSGKM, CST, and SANM. The Proton donor/acceptor role is filled by histidine 143. Histidine 144 contacts (S)-2,3,4,5-tetrahydrodipicolinate. Lysine 147 acts as the Proton donor in catalysis. 153–154 lines the (S)-2,3,4,5-tetrahydrodipicolinate pocket; sequence GT.

Belongs to the DapB family.

It is found in the cytoplasm. It carries out the reaction (S)-2,3,4,5-tetrahydrodipicolinate + NAD(+) + H2O = (2S,4S)-4-hydroxy-2,3,4,5-tetrahydrodipicolinate + NADH + H(+). The catalysed reaction is (S)-2,3,4,5-tetrahydrodipicolinate + NADP(+) + H2O = (2S,4S)-4-hydroxy-2,3,4,5-tetrahydrodipicolinate + NADPH + H(+). The protein operates within amino-acid biosynthesis; L-lysine biosynthesis via DAP pathway; (S)-tetrahydrodipicolinate from L-aspartate: step 4/4. In terms of biological role, catalyzes the conversion of 4-hydroxy-tetrahydrodipicolinate (HTPA) to tetrahydrodipicolinate. This chain is 4-hydroxy-tetrahydrodipicolinate reductase, found in Clostridium perfringens (strain ATCC 13124 / DSM 756 / JCM 1290 / NCIMB 6125 / NCTC 8237 / Type A).